Reading from the N-terminus, the 217-residue chain is MSDDQGDAVEASSEADEEASTSPDEGDDRDPVAAVAERAENDPASVAAELVALREEAAELETERDDLESRLKRKQAEFQNYKKRQEKQREKERARATEALVEKLLEVRDNLNRALEQDADADIREGVEATFRQLDDILDGEGVEAIEPDPGTETDPKRHEVLLQVESDEPEGTVAELHRPGYEMAGKVLRAAQVTVSEGPSGDSEAEDDADGEDGDE.

Acidic residues-rich tracts occupy residues 1-28 (MSDD…EGDD), 136-152 (DILD…DPGT), and 204-217 (SEAE…DGDE). Disordered regions lie at residues 1 to 44 (MSDD…NDPA), 135 to 157 (DDIL…TDPK), and 193 to 217 (QVTV…DGDE).

Belongs to the GrpE family. Homodimer.

It is found in the cytoplasm. In terms of biological role, participates actively in the response to hyperosmotic and heat shock by preventing the aggregation of stress-denatured proteins, in association with DnaK and GrpE. It is the nucleotide exchange factor for DnaK and may function as a thermosensor. Unfolded proteins bind initially to DnaJ; upon interaction with the DnaJ-bound protein, DnaK hydrolyzes its bound ATP, resulting in the formation of a stable complex. GrpE releases ADP from DnaK; ATP binding to DnaK triggers the release of the substrate protein, thus completing the reaction cycle. Several rounds of ATP-dependent interactions between DnaJ, DnaK and GrpE are required for fully efficient folding. In Natronomonas pharaonis (strain ATCC 35678 / DSM 2160 / CIP 103997 / JCM 8858 / NBRC 14720 / NCIMB 2260 / Gabara) (Halobacterium pharaonis), this protein is Protein GrpE.